Reading from the N-terminus, the 104-residue chain is L-rhamnose mutarotase (104 aa).

Tyrosine 18 contacts substrate. Histidine 22 (proton donor) is an active-site residue. Substrate contacts are provided by residues tyrosine 41 and 76–77 (WW).

This sequence belongs to the rhamnose mutarotase family. Homodimer.

The protein resides in the cytoplasm. The enzyme catalyses alpha-L-rhamnose = beta-L-rhamnose. It participates in carbohydrate metabolism; L-rhamnose metabolism. Its function is as follows. Involved in the anomeric conversion of L-rhamnose. The protein is L-rhamnose mutarotase of Shigella flexneri serotype 5b (strain 8401).